The primary structure comprises 59 residues: Insertion element IS986 uncharacterized 6.6 kDa protein (59 aa).

The interval 1-26 (MRKWVRQAQVDAGARPGTTTEESAEI) is disordered.

This sequence belongs to the transposase 8 family.

This Mycobacterium tuberculosis protein is Insertion element IS986 uncharacterized 6.6 kDa protein.